The sequence spans 62 residues: uncharacterized protein (62 aa).

This is an uncharacterized protein from Invertebrate iridescent virus 6 (IIV-6).